A 412-amino-acid polypeptide reads, in one-letter code: Class E basic helix-loop-helix protein 40 (412 aa).

Positions 1 to 139 (MERIPSAQPP…LSGRNVETGQ (139 aa)) are essential for interaction with BMAL1, E-box binding and repressor activity against the CLOCK-BMAL1 heterodimer. The bHLH domain occupies 52 to 107 (TYKLPHRLIEKKRRDRINECIAQLKDLLPEHLKLTTLGHLEKAVVLELTLKHVKAL). The interval 75 to 79 (LKDLL) is necessary for interaction with RXRA and repressor activity against RXRA. Positions 142-175 (FCSGFQTCAREVLQYLAKHENTRDLKSSQLVTHL) constitute an Orange domain. Residue K159 forms a Glycyl lysine isopeptide (Lys-Gly) (interchain with G-Cter in SUMO1, SUMO2 and SUMO3) linkage. K167 is covalently cross-linked (Glycyl lysine isopeptide (Lys-Gly) (interchain with G-Cter in SUMO2)). The disordered stretch occupies residues 182 to 303 (LLQGGTSRKP…LSDDEGHFTS (122 aa)). S235 bears the Phosphoserine mark. Positions 248–271 (ESEKGDLRSEQPCFKSDHGRRFTM) are enriched in basic and acidic residues. K279 participates in a covalent cross-link: Glycyl lysine isopeptide (Lys-Gly) (interchain with G-Cter in SUMO1); alternate. K279 participates in a covalent cross-link: Glycyl lysine isopeptide (Lys-Gly) (interchain with G-Cter in SUMO1, SUMO2 and SUMO3); alternate. K279 is covalently cross-linked (Glycyl lysine isopeptide (Lys-Gly) (interchain with G-Cter in SUMO2); alternate). Residue K288 forms a Glycyl lysine isopeptide (Lys-Gly) (interchain with G-Cter in SUMO2) linkage. The residue at position 383 (S383) is a Phosphoserine.

As to quaternary structure, homodimer. Heterodimer with BHLHE41/DEC2. Interacts with TCF3/E47. Interacts with ubiquitin-conjugating enzyme UBE2I/UBC9. Interacts with HDAC1, SUMO1, RXRA and BMAL1. In terms of processing, ubiquitinated; which may lead to proteasomal degradation. Post-translationally, sumoylation inhibits its ubiquitination and promotes its negative regulation of the CLOCK-BMAL1 heterodimer transcriptional activator activity. As to expression, expressed in cartilage, spleen, intestine, lung, and to a lesser extent in heart, brain, liver, muscle and stomach.

Its subcellular location is the cytoplasm. It is found in the nucleus. Functionally, transcriptional repressor involved in the regulation of the circadian rhythm by negatively regulating the activity of the clock genes and clock-controlled genes. Acts as the negative limb of a novel autoregulatory feedback loop (DEC loop) which differs from the one formed by the PER and CRY transcriptional repressors (PER/CRY loop). Both these loops are interlocked as it represses the expression of PER1/2 and in turn is repressed by PER1/2 and CRY1/2. Represses the activity of the circadian transcriptional activator: CLOCK-BMAL1|BMAL2 heterodimer by competing for the binding to E-box elements (5'-CACGTG-3') found within the promoters of its target genes. Negatively regulates its own expression and the expression of DBP and BHLHE41/DEC2. Acts as a corepressor of RXR and the RXR-LXR heterodimers and represses the ligand-induced RXRA and NR1H3/LXRA transactivation activity. May be involved in the regulation of chondrocyte differentiation via the cAMP pathway. Represses the transcription of NR0B2 and attentuates the transactivation of NR0B2 by the CLOCK-BMAL1 complex. Drives the circadian rhythm of blood pressure through transcriptional repression of ATP1B1 in the cardiovascular system. This chain is Class E basic helix-loop-helix protein 40 (BHLHE40), found in Homo sapiens (Human).